The primary structure comprises 273 residues: MPELPEVETLKNSLKDKLIGLIIENVELKRDNLRYKLSPLLATEILNTNILDVRRRAKYLIIDFNNDYSLIVHLGMNGRFTLQSANYKTQKHDHVIFDLSNGEKLIFNDTRRFGMIYSFKTDLLEKEFFNDLGIEPFSDLLTLEYLKDKLQTKKIPIKNLIMDNRVIVGVGNIYASESLHLARIHPDKSGNDLRDDEIENLIKAIRDVLTKAITAGGTTLKDFVNGDNKPGYFTKQLKVYGREGQSCLSCSSTIIKIKHSGRSTFYCKTCQYS.

Pro2 (schiff-base intermediate with DNA) is an active-site residue. The Proton donor role is filled by Glu3. Residue Lys58 is the Proton donor; for beta-elimination activity of the active site. Residues His92, Arg111, and Lys153 each coordinate DNA. An FPG-type zinc finger spans residues 238–272 (KVYGREGQSCLSCSSTIIKIKHSGRSTFYCKTCQY). Arg262 (proton donor; for delta-elimination activity) is an active-site residue.

Belongs to the FPG family. In terms of assembly, monomer. It depends on Zn(2+) as a cofactor.

The enzyme catalyses Hydrolysis of DNA containing ring-opened 7-methylguanine residues, releasing 2,6-diamino-4-hydroxy-5-(N-methyl)formamidopyrimidine.. It carries out the reaction 2'-deoxyribonucleotide-(2'-deoxyribose 5'-phosphate)-2'-deoxyribonucleotide-DNA = a 3'-end 2'-deoxyribonucleotide-(2,3-dehydro-2,3-deoxyribose 5'-phosphate)-DNA + a 5'-end 5'-phospho-2'-deoxyribonucleoside-DNA + H(+). In terms of biological role, involved in base excision repair of DNA damaged by oxidation or by mutagenic agents. Acts as a DNA glycosylase that recognizes and removes damaged bases. Has a preference for oxidized purines, such as 7,8-dihydro-8-oxoguanine (8-oxoG). Has AP (apurinic/apyrimidinic) lyase activity and introduces nicks in the DNA strand. Cleaves the DNA backbone by beta-delta elimination to generate a single-strand break at the site of the removed base with both 3'- and 5'-phosphates. The protein is Formamidopyrimidine-DNA glycosylase of Rickettsia peacockii (strain Rustic).